The following is a 571-amino-acid chain: Alpha-1D adrenergic receptor (571 aa).

The Extracellular segment spans residues methionine 1 to glutamine 94. Residues glycine 13–glycine 75 are disordered. Residues serine 19 to glycine 34 are compositionally biased toward gly residues. The span at alanine 35–proline 47 shows a compositional bias: low complexity. Residues glycine 48–glycine 57 show a composition bias toward gly residues. Asparagine 64 and asparagine 81 each carry an N-linked (GlcNAc...) asparagine glycan. Residues glycine 95–valine 120 form a helical membrane-spanning segment. Residues alanine 121–tyrosine 132 are Cytoplasmic-facing. The chain crosses the membrane as a helical span at residues phenylalanine 133–leucine 158. Over glycine 159–cysteine 168 the chain is Extracellular. The helical transmembrane segment at aspartate 169–valine 191 threads the bilayer. The Cytoplasmic segment spans residues aspartate 192–alanine 212. A helical transmembrane segment spans residues alanine 213–proline 237. Topologically, residues valine 238–glutamate 250 are extracellular. A helical membrane pass occupies residues alanine 251–cysteine 274. The Cytoplasmic portion of the chain corresponds to arginine 275 to lysine 348. Residues threonine 349–leucine 373 form a helical membrane-spanning segment. Residues phenylalanine 374–serine 380 are Extracellular-facing. Residues glutamate 381–serine 405 traverse the membrane as a helical segment. Over serine 406–isoleucine 571 the chain is Cytoplasmic. Cysteine 419 is lipidated: S-palmitoyl cysteine. A disordered region spans residues leucine 465–arginine 487.

Belongs to the G-protein coupled receptor 1 family. Adrenergic receptor subfamily. ADRA1D sub-subfamily. In terms of assembly, interacts with FLNA (via filamin repeat 21); increases PKA-mediated phosphorylation of FLNA. Palmitoylated. Palmitoylation by ZDHHC21 may increase the expression of the receptor and regulate downstream signaling.

It is found in the cell membrane. Functionally, this alpha-adrenergic receptor mediates its effect through the influx of extracellular calcium. The chain is Alpha-1D adrenergic receptor (ADRA1D) from Sus scrofa (Pig).